Here is a 163-residue protein sequence, read N- to C-terminus: Type VII secretion system protein EsaG (163 aa).

As to quaternary structure, interacts with EssD (via C-terminus). Interacts with EssE.

The protein localises to the cytoplasm. In terms of biological role, component of the type VII secretion system (Ess). Also acts as part of toxin-antitoxin system. Counteracts the toxic effect of EssD via direct interaction. The sequence is that of Type VII secretion system protein EsaG from Staphylococcus aureus (strain NCTC 8325 / PS 47).